The primary structure comprises 107 residues: Phosphoribosyl-ATP pyrophosphatase (107 aa).

The protein belongs to the PRA-PH family.

The protein resides in the cytoplasm. It carries out the reaction 1-(5-phospho-beta-D-ribosyl)-ATP + H2O = 1-(5-phospho-beta-D-ribosyl)-5'-AMP + diphosphate + H(+). It functions in the pathway amino-acid biosynthesis; L-histidine biosynthesis; L-histidine from 5-phospho-alpha-D-ribose 1-diphosphate: step 2/9. The protein is Phosphoribosyl-ATP pyrophosphatase of Caulobacter sp. (strain K31).